Here is a 117-residue protein sequence, read N- to C-terminus: Crustacean hyperglycemic hormones 3 (117 aa).

A signal peptide spans 1–24; that stretch reads MVTPRMLSALSAVLLLVLTASSSA. Intrachain disulfides connect Cys-50/Cys-86, Cys-66/Cys-82, and Cys-69/Cys-95. A Valine amide modification is found at Val-115.

This sequence belongs to the arthropod CHH/MIH/GIH/VIH hormone family. As to expression, produced by the medulla terminalis X-organ in the eyestalks and transported to the sinus gland where they are stored and released.

It is found in the secreted. In terms of biological role, hormone found in the sinus gland of isopods and decapods which controls the blood sugar level. Has a secretagogue action over the amylase released from the midgut gland. May act as a stress hormone and may be involved in the control of molting and reproduction. The sequence is that of Crustacean hyperglycemic hormones 3 from Penaeus japonicus (Kuruma prawn).